The chain runs to 622 residues: MSTDNKQSLPAITLAAIGVVYGDIGTSPLYTLRECLSGQFGFGVERDAVFGFLSLIFWLLIFVVSIKYLTFVMRADNAGEGGILTLMSLAGRNTSARTTSMLVIMGLIGGSFFYGEVVITPAISVMSAIEGLEIVAPQLDTWIVPLSIIVLTLLFMIQKHGTAMVGKLFAPIMLTWFLILAGLGLRSIIANPEVLHALNPMWAVHFFLEYKTVSFIALGAVVLSITGVEALYADMGHFGKFPIRLAWFTVVLPSLTLNYFGQGALLLKNPEAIKNPFFLLAPDWALIPLLIIAALATVIASQAVISGVFSLTRQAVRLGYLSPMRIIHTSEMESGQIYIPFVNWMLYVAVVIVIVSFEHSSNLAAAYGIAVTGTMVLTSILSTTVARQNWHWNKYFVALILIAFLCVDIPLFTANLDKLLSGGWLPLSLGTVMFIVMTTWKSERFRLLRRMHEHGNSLEAMIASLEKSPPVRVPGTAVYMSRAINVIPFALMHNLKHNKVLHERVILLTLRTEDAPYVHNVRRVQIEQLSPTFWRVVASYGWRETPNVEEVFHRCGLEGLSCRMMETSFFMSHESLILGKRPWYLRLRGKLYLLLQRNALRAPDQFEIPPNRVIELGTQVEI.

12 helical membrane passes run 9 to 29 (LPAI…TSPL), 49 to 69 (VFGF…IKYL), 103 to 123 (VIMG…TPAI), 137 to 157 (PQLD…LFMI), 165 to 185 (VGKL…GLGL), 213 to 233 (VSFI…ALYA), 247 to 267 (WFTV…ALLL), 276 to 296 (PFFL…AALA), 337 to 357 (IYIP…IVSF), 363 to 383 (LAAA…ILST), 396 to 416 (FVAL…TANL), and 419 to 439 (LLSG…VMTT).

This sequence belongs to the HAK/KUP transporter (TC 2.A.72) family.

It localises to the cell inner membrane. It catalyses the reaction K(+)(in) + H(+)(in) = K(+)(out) + H(+)(out). Its function is as follows. Responsible for the low-affinity transport of potassium into the cell. Likely operates as a K(+):H(+) symporter. The protein is Low affinity potassium transport system protein Kup of Escherichia coli (strain K12 / MC4100 / BW2952).